We begin with the raw amino-acid sequence, 596 residues long: Elongation factor 4 (596 aa).

Positions 2–184 constitute a tr-type G domain; it reads KHIRNFSIIA…VIVEQIPPPE (183 aa). GTP-binding positions include 14–19 and 131–134; these read DHGKST and NKID.

Belongs to the TRAFAC class translation factor GTPase superfamily. Classic translation factor GTPase family. LepA subfamily.

The protein localises to the cell inner membrane. It carries out the reaction GTP + H2O = GDP + phosphate + H(+). In terms of biological role, required for accurate and efficient protein synthesis under certain stress conditions. May act as a fidelity factor of the translation reaction, by catalyzing a one-codon backward translocation of tRNAs on improperly translocated ribosomes. Back-translocation proceeds from a post-translocation (POST) complex to a pre-translocation (PRE) complex, thus giving elongation factor G a second chance to translocate the tRNAs correctly. Binds to ribosomes in a GTP-dependent manner. The polypeptide is Elongation factor 4 (Shewanella sp. (strain MR-7)).